The primary structure comprises 1217 residues: MIDVNKFESMQIGLASPNKIRSWSYGEVKKPETINYRTLKPEKDGLFDERIFGPTKDWSCACGKYKGVRYRGIVCDRCGVEVTSSKVRRERMGHIELAAPVTHIWYFKGIPSRMGLVLDISPKLLEEVIYFAAYIVIDPGDTDLEPKQLLTEAEYREQKAKYGNRFEAKMGAEAIRELLKKVDLDKEVKDLKKELQTATGQKRTRAIRRLDILDTFKNSGNKPEWMVMDAVPVIPPDLRPMVQLEGGRFATSDLNDLYRRVINRNNRLKRLLDLNAPNIIVQNEKRMLQEAVDALIDNGRRGRPVVGPGNRPLKSLSHMLKGKQGRFRQNLLGKRVDYSGRSVIDVSPKLKFYQCGVPRPMALELFKPFVMHELVKRGIASNIKNAKRKIDSEDDDIWDVLEDVIKERPVLLNRAPTLHRLSIQAFEPVLVPGKSIRLHPLACEAYNADFDGDQMAIHVPLSDEAVAESRLLMLAAHHILAPKDGKPIVTPSQDIVLGNYWLTQAERGREGEGMIFSSPAEATVAYENGDIHYHTIIGMSADAMPKKPWPQGHEHGIFITTYGKLVFNQLFPDDYFYINEPTEENLNNPLDAKYFLGEGQDIHDKIDEVGDDLIATPFKSSFLSDSIATIYKYYKVQRTSEYLDDLKKLGYTSSTTSGITIGMNDVPEIKDKDEKVAKARKQVDIVSKQFRRGLITEQERHDRVISIWNACKDEIQNEIAQIHSPRNPISIMADSGARGNISNFTQLAGMRGLMATPNGGLFEIPVTSNFKEGLSVLELFMSTHGARKGMTDTALKTAQSGYLTRRLVDVAQDVIIRDDDCGTDRGITVSAIMEGDEMIEPLFDRLVGRFTAETVKDPKTGEAIVGRDVMMDENMAHKICDAGVTHVKIRSILTCDTPHGVCRKCYGMNLATGEEVEVGEAVGTVAAQSIGEPGTQLTLRTFHNGGVAGAEDITQGLPRVQELFEARNPKGRATISEVDGVIDSIQENPADHTREITVKGKIDTRSYSVPYTASVAVSEGDYVHRGDKLTLGSVDPKELIQVTDTLTTEKYILAEVQKAYRMQGVDIADKHVEVLTRQMLQKVRVLDPGETDILPGEVMDIGQFRDRNKEVIISGGIPATAQSVILGITKAALETNSFLSAASFQETTRVLTDASIRGKNDPLLGLKENVIIGKIIPAGTGMPVYRNMEPEADVKKPDSVYSIGDIEKQMKEKEQSK.

Residues cysteine 60, cysteine 62, cysteine 75, and cysteine 78 each coordinate Zn(2+). The Mg(2+) site is built by aspartate 449, aspartate 451, and aspartate 453. Residues cysteine 821, cysteine 895, cysteine 902, and cysteine 905 each contribute to the Zn(2+) site.

It belongs to the RNA polymerase beta' chain family. As to quaternary structure, the RNAP catalytic core consists of 2 alpha, 1 beta, 1 beta' and 1 omega subunit. When a sigma factor is associated with the core the holoenzyme is formed, which can initiate transcription. Mg(2+) serves as cofactor. It depends on Zn(2+) as a cofactor.

It catalyses the reaction RNA(n) + a ribonucleoside 5'-triphosphate = RNA(n+1) + diphosphate. In terms of biological role, DNA-dependent RNA polymerase catalyzes the transcription of DNA into RNA using the four ribonucleoside triphosphates as substrates. The protein is DNA-directed RNA polymerase subunit beta' of Lactobacillus helveticus (strain DPC 4571).